Here is a 348-residue protein sequence, read N- to C-terminus: Dihydroorotase (348 aa).

Zn(2+) is bound by residues His-14 and His-16. Substrate-binding positions include 16-18 and Asn-42; that span reads HLR. Lys-100, His-137, and His-175 together coordinate Zn(2+). Lys-100 is subject to N6-carboxylysine. His-137 contributes to the substrate binding site. Residue Leu-220 participates in substrate binding. A Zn(2+)-binding site is contributed by Asp-248. The active site involves Asp-248. 2 residues coordinate substrate: His-252 and Ala-264.

This sequence belongs to the metallo-dependent hydrolases superfamily. DHOase family. Class II DHOase subfamily. Homodimer. It depends on Zn(2+) as a cofactor.

It carries out the reaction (S)-dihydroorotate + H2O = N-carbamoyl-L-aspartate + H(+). The protein operates within pyrimidine metabolism; UMP biosynthesis via de novo pathway; (S)-dihydroorotate from bicarbonate: step 3/3. In terms of biological role, catalyzes the reversible cyclization of carbamoyl aspartate to dihydroorotate. The sequence is that of Dihydroorotase from Pseudomonas aeruginosa (strain ATCC 15692 / DSM 22644 / CIP 104116 / JCM 14847 / LMG 12228 / 1C / PRS 101 / PAO1).